The chain runs to 272 residues: Pyrroline-5-carboxylate reductase (272 aa).

It belongs to the pyrroline-5-carboxylate reductase family.

It is found in the cytoplasm. The catalysed reaction is L-proline + NADP(+) = (S)-1-pyrroline-5-carboxylate + NADPH + 2 H(+). It catalyses the reaction L-proline + NAD(+) = (S)-1-pyrroline-5-carboxylate + NADH + 2 H(+). It functions in the pathway amino-acid biosynthesis; L-proline biosynthesis; L-proline from L-glutamate 5-semialdehyde: step 1/1. Its function is as follows. Catalyzes the reduction of 1-pyrroline-5-carboxylate (PCA) to L-proline. The sequence is that of Pyrroline-5-carboxylate reductase from Vibrio alginolyticus.